A 283-amino-acid chain; its full sequence is UPF0273 protein STK_18300 (283 aa).

Positions 4-249 constitute a KaiC domain; the sequence is LRVRTYIPGF…YLRITNVKAE (246 aa). 31 to 38 serves as a coordination point for ATP; sequence GGPGTGKS. The tract at residues 261–283 is disordered; it reads MKKAVEESEEEKESIQEAEIEEE. Residues 267–283 are compositionally biased toward acidic residues; sequence ESEEEKESIQEAEIEEE.

Belongs to the UPF0273 family.

The protein is UPF0273 protein STK_18300 of Sulfurisphaera tokodaii (strain DSM 16993 / JCM 10545 / NBRC 100140 / 7) (Sulfolobus tokodaii).